Consider the following 91-residue polypeptide: Small ribosomal subunit protein uS19 (91 aa).

It belongs to the universal ribosomal protein uS19 family.

In terms of biological role, protein S19 forms a complex with S13 that binds strongly to the 16S ribosomal RNA. The chain is Small ribosomal subunit protein uS19 from Bordetella petrii (strain ATCC BAA-461 / DSM 12804 / CCUG 43448).